The chain runs to 440 residues: tRNA(Ile)-lysidine synthase (440 aa).

Ser25–Ser30 provides a ligand contact to ATP.

It belongs to the tRNA(Ile)-lysidine synthase family.

It is found in the cytoplasm. The catalysed reaction is cytidine(34) in tRNA(Ile2) + L-lysine + ATP = lysidine(34) in tRNA(Ile2) + AMP + diphosphate + H(+). In terms of biological role, ligates lysine onto the cytidine present at position 34 of the AUA codon-specific tRNA(Ile) that contains the anticodon CAU, in an ATP-dependent manner. Cytidine is converted to lysidine, thus changing the amino acid specificity of the tRNA from methionine to isoleucine. In Vibrio cholerae serotype O1 (strain ATCC 39315 / El Tor Inaba N16961), this protein is tRNA(Ile)-lysidine synthase.